The primary structure comprises 146 residues: Protein phosphatase 1 regulatory subunit 14D (146 aa).

Residues 1 to 16 are compositionally biased toward polar residues; sequence MLSSSAASCTSPNPDT. A disordered region spans residues 1-57; sequence MLSSSAASCTSPNPDTDNPDKKVRWSSEKRRRASSTDSESKTHLDISKLPRSRRPSR. Basic and acidic residues-rich tracts occupy residues 18 to 28 and 38 to 48; these read NPDKKVRWSSE and SESKTHLDISK. The segment at 21 to 25 is interaction with protein phosphatase 1; it reads KKVRW.

The protein belongs to the PP1 inhibitor family. In terms of processing, phosphorylated on several residues.

It localises to the cytoplasm. Functionally, inhibitor of PPP1CA. Has inhibitory activity only when phosphorylated, creating a molecular switch for regulating the phosphorylation status of PPP1CA substrates and smooth muscle contraction. The chain is Protein phosphatase 1 regulatory subunit 14D (Ppp1r14d) from Rattus norvegicus (Rat).